A 454-amino-acid polypeptide reads, in one-letter code: MTDLLNDRLPPQNIEAEQAVLGAIFLQPSALTLASEVLIPDDFYRMSHQKIYNAMLVLGDRGEPVDLVTVTSELANTDLLEEVGGISYLTDIANSVPTAANIEYYAKIVEEKSILRRLIRTATTIAQDGYTREDEVEDLLSEAEKTIMEVAQRKNTSAFQNIKDVLVQTYDNIEQLHNRKGDITGIPTGFTELDRMTAGFQRNDLIIVAARPSVGKTAFALNIAQNVATKTDESVAIFSLEMGAEQLVMRMLCAEGNINAQNLRTGNLTEEDWGKLTMAMGSLSNSGIYIDDTPGIRVSEIRAKCRRLKQESGLGMILIDYLQLIQGSGRSKDNRQQEVSEISRELKSIARELQVPVIALSQLSRGVEQRQDKRPMMSDIRESGSIEQDADIVAFLYRDDYYDKETENKNIIEIIIAKQRNGPVGTVSLAFVKEYNKFVNLERRFDDAGVPPGA.

One can recognise an SF4 helicase domain in the interval 179 to 445 (RKGDITGIPT…NKFVNLERRF (267 aa)). 210–217 (ARPSVGKT) provides a ligand contact to ATP.

Belongs to the helicase family. DnaB subfamily. In terms of assembly, the DNA replisome assembles sequentially on oriC in this order; DnaA, DnaD, DnaB, DnaI-DnaC helicase. Monomer in the absence of ATP, in its presence forms a probable homohexamer which is not active as a helicase in vitro. Interacts separately and simultaneously with helicase loaders DnaB and DnaI. Interaction with DnaB does not require ATP. Interaction with DnaI requires ATP, probably forms a DnaC(6):DnaI(6) complex, which is not active as a helicase.

The protein resides in the cytoplasm. It localises to the nucleoid. The catalysed reaction is Couples ATP hydrolysis with the unwinding of duplex DNA at the replication fork by translocating in the 5'-3' direction. This creates two antiparallel DNA single strands (ssDNA). The leading ssDNA polymer is the template for DNA polymerase III holoenzyme which synthesizes a continuous strand.. It carries out the reaction ATP + H2O = ADP + phosphate + H(+). In terms of biological role, the main replicative DNA helicase, it participates in initiation and elongation during chromosome replication. Travels ahead of the DNA replisome, separating dsDNA into templates for DNA synthesis. The monomer has helicase activity in the presence of DnaI which is further increased by DnaB; the purified oligomeric form (probably a DnaC hexamer) does not have helicase activity in vitro, nor does the DnaC(6):DnaI(6) complex. The direction was not determined but is probably 5'-3'. Helicase activity requires an rNTP and is inactive with dNTPs. Has weak ATPase activity as a monomer, as an oligomer has ATPase activity which is stimulated by single-stranded (ss)DNA and further stimulated by DnaI and more by DnaB. Its function is as follows. Deletion of a single T residue in the promoter region (a run of 8 Ts becomes 7 Ts) decreases the helicase levels by 50%, decreasing DNA replication inititation during fast growth in rich medium. Suppresses the synthetic lethality of a dnaA1-yabA deletion for growth on rich medium. This chain is Replicative DNA helicase DnaC, found in Bacillus subtilis (strain 168).